We begin with the raw amino-acid sequence, 251 residues long: Maleate isomerase (251 aa).

Residues Asn-15, 81–83 (CLV), Tyr-138, and Asn-168 contribute to the substrate site. Cys-81 serves as the catalytic Nucleophile. Residue Cys-81 is modified to S-(2-succinyl)cysteine. Cys-199 (proton donor) is an active-site residue. Residue 200-201 (VQ) coordinates substrate.

This sequence belongs to the maleate isomerase family. Homodimer.

It catalyses the reaction maleate = fumarate. Functionally, catalyzes cis-trans isomerization of the C2-C3 double bond in maleate to yield fumarate. The sequence is that of Maleate isomerase from Geobacillus stearothermophilus (Bacillus stearothermophilus).